Consider the following 215-residue polypeptide: Polysialic acid O-acetyltransferase (215 aa).

Residues 119 to 121 (DMH), arginine 148, lysine 154, serine 166, 171 to 172 (YK), and lysine 190 each bind acetyl-CoA.

Belongs to the transferase hexapeptide repeat family. As to quaternary structure, homotrimer.

The enzyme catalyses [(2-&gt;6)-alpha-D-glucosyl-(1-&gt;4)-N-acetyl-alpha-D-neuraminosyl](n) + n acetyl-CoA = [(2-&gt;6)-alpha-D-glucosyl-(1-&gt;4)-N,7-O-diacetyl-alpha-D-neuraminosyl](n) + n CoA. It carries out the reaction [(2-&gt;6)-alpha-D-glucosyl-(1-&gt;4)-N-acetyl-alpha-D-neuraminosyl](n) + n acetyl-CoA = [(2-&gt;6)-alpha-D-glucosyl-(1-&gt;4)-N,O(9)-diacetyl-alpha-D-neuraminosyl](n) + n CoA. Its function is as follows. Catalyzes the O-acetylation of capsular polymeric sialic acid consisting of polymers of (2-&gt;6)-alpha-D-glucosyl-(1-&gt;4)-N-acetyl-alpha-D-neuraminosyl residues. Shows high substrate specificity toward polymers of sialic acid that contains a large number of residues. The protein is Polysialic acid O-acetyltransferase of Neisseria meningitidis.